The following is a 375-amino-acid chain: Chaperone protein DnaJ (375 aa).

Residues aspartate 5–glycine 70 form the J domain. The CR-type zinc-finger motif lies at glycine 136 to glutamate 214. Residues cysteine 149, cysteine 152, cysteine 166, cysteine 169, cysteine 188, cysteine 191, cysteine 202, and cysteine 205 each coordinate Zn(2+). CXXCXGXG motif repeat units follow at residues cysteine 149–glycine 156, cysteine 166–glycine 173, cysteine 188–glycine 195, and cysteine 202–glycine 209.

Belongs to the DnaJ family. In terms of assembly, homodimer. It depends on Zn(2+) as a cofactor.

The protein resides in the cytoplasm. Its function is as follows. Participates actively in the response to hyperosmotic and heat shock by preventing the aggregation of stress-denatured proteins and by disaggregating proteins, also in an autonomous, DnaK-independent fashion. Unfolded proteins bind initially to DnaJ; upon interaction with the DnaJ-bound protein, DnaK hydrolyzes its bound ATP, resulting in the formation of a stable complex. GrpE releases ADP from DnaK; ATP binding to DnaK triggers the release of the substrate protein, thus completing the reaction cycle. Several rounds of ATP-dependent interactions between DnaJ, DnaK and GrpE are required for fully efficient folding. Also involved, together with DnaK and GrpE, in the DNA replication of plasmids through activation of initiation proteins. This Rhizobium johnstonii (strain DSM 114642 / LMG 32736 / 3841) (Rhizobium leguminosarum bv. viciae) protein is Chaperone protein DnaJ.